A 295-amino-acid chain; its full sequence is uncharacterized protein (295 aa).

The HTH araC/xylS-type domain occupies 8–106 (QKTINWIESH…HMPPGAYRTF (99 aa)). Positions 25–46 (EDIVNVSSFSKFHFHRIFQKEV) form a DNA-binding region, H-T-H motif.

In terms of biological role, probable transcriptional regulator. This is an uncharacterized protein from Bacillus subtilis (strain 168).